The primary structure comprises 292 residues: NAD kinase (292 aa).

Aspartate 73 acts as the Proton acceptor in catalysis. Residues 73-74, 147-148, histidine 158, arginine 175, aspartate 177, 188-193, and glutamine 248 each bind NAD(+); these read DG, NE, and TGYSLS.

Belongs to the NAD kinase family. It depends on a divalent metal cation as a cofactor.

Its subcellular location is the cytoplasm. The enzyme catalyses NAD(+) + ATP = ADP + NADP(+) + H(+). Functionally, involved in the regulation of the intracellular balance of NAD and NADP, and is a key enzyme in the biosynthesis of NADP. Catalyzes specifically the phosphorylation on 2'-hydroxyl of the adenosine moiety of NAD to yield NADP. The polypeptide is NAD kinase (Buchnera aphidicola subsp. Baizongia pistaciae (strain Bp)).